Reading from the N-terminus, the 254-residue chain is Phosphoribosylaminoimidazole-succinocarboxamide synthase (254 aa).

This sequence belongs to the SAICAR synthetase family.

The catalysed reaction is 5-amino-1-(5-phospho-D-ribosyl)imidazole-4-carboxylate + L-aspartate + ATP = (2S)-2-[5-amino-1-(5-phospho-beta-D-ribosyl)imidazole-4-carboxamido]succinate + ADP + phosphate + 2 H(+). Its pathway is purine metabolism; IMP biosynthesis via de novo pathway; 5-amino-1-(5-phospho-D-ribosyl)imidazole-4-carboxamide from 5-amino-1-(5-phospho-D-ribosyl)imidazole-4-carboxylate: step 1/2. The sequence is that of Phosphoribosylaminoimidazole-succinocarboxamide synthase from Gluconacetobacter diazotrophicus (strain ATCC 49037 / DSM 5601 / CCUG 37298 / CIP 103539 / LMG 7603 / PAl5).